A 590-amino-acid polypeptide reads, in one-letter code: Putative DEAD-box ATP-dependent RNA helicase 51 (590 aa).

The interval 1–81 (MHPIKLCARS…KQGEGKKGSG (81 aa)) is disordered. Residues 40 to 51 (AACNSEGENNAT) show a composition bias toward polar residues. The segment covering 59-78 (NKKMKEEKSKRKKKQGEGKK) has biased composition (basic and acidic residues). The short motif at 86–114 (KLFSDLPISDLTANAIRDMNYTHLTEIQA) is the Q motif element. The Helicase ATP-binding domain maps to 117–293 (IPPLMLGSDV…KLTFGSKEER (177 aa)). 130–137 (AKTGSGKT) serves as a coordination point for ATP. The DEAD box signature appears at 240-243 (DEAD). In terms of domain architecture, Helicase C-terminal spans 329 to 481 (VLYAFLKKAL…ELVPKLQPYL (153 aa)). Residues 549 to 590 (LESSASKHRKKRNVNTGRRHGIGPSNPYGRKGSDDRRQFARF) are disordered. Residues 554–569 (SKHRKKRNVNTGRRHG) are compositionally biased toward basic residues. Residues 579–590 (KGSDDRRQFARF) show a composition bias toward basic and acidic residues.

Belongs to the DEAD box helicase family. DDX18/HAS1 subfamily.

The enzyme catalyses ATP + H2O = ADP + phosphate + H(+). This is Putative DEAD-box ATP-dependent RNA helicase 51 from Oryza sativa subsp. japonica (Rice).